Here is a 340-residue protein sequence, read N- to C-terminus: Phospho-N-acetylmuramoyl-pentapeptide-transferase (340 aa).

9 helical membrane-spanning segments follow: residues 24–44 (VPFGLSVLGSALLGSLLLPVL), 69–89 (TMGGLSFLPVGLLVAGIGSGW), 95–115 (AVALLTLAYTVVGWLDDWLVI), 129–149 (LLLQVGIGLVFCGYLAWQGIP), 156–176 (GIGALPLGWLFWPLALFVLVG), 196–216 (ALVLAGLGLTAADPVLALVAF), 235–255 (LFMGDTGSLGLGGALAGLALL), 260–280 (WALAWMGAVLVAEALSVILQV), and 316–336 (VVGCFYGLTALLVGLGWAWWH).

Belongs to the glycosyltransferase 4 family. MraY subfamily. The cofactor is Mg(2+).

The protein resides in the cell inner membrane. The enzyme catalyses UDP-N-acetyl-alpha-D-muramoyl-L-alanyl-gamma-D-glutamyl-meso-2,6-diaminopimeloyl-D-alanyl-D-alanine + di-trans,octa-cis-undecaprenyl phosphate = di-trans,octa-cis-undecaprenyl diphospho-N-acetyl-alpha-D-muramoyl-L-alanyl-D-glutamyl-meso-2,6-diaminopimeloyl-D-alanyl-D-alanine + UMP. The protein operates within cell wall biogenesis; peptidoglycan biosynthesis. Functionally, catalyzes the initial step of the lipid cycle reactions in the biosynthesis of the cell wall peptidoglycan: transfers peptidoglycan precursor phospho-MurNAc-pentapeptide from UDP-MurNAc-pentapeptide onto the lipid carrier undecaprenyl phosphate, yielding undecaprenyl-pyrophosphoryl-MurNAc-pentapeptide, known as lipid I. This is Phospho-N-acetylmuramoyl-pentapeptide-transferase from Synechococcus sp. (strain JA-3-3Ab) (Cyanobacteria bacterium Yellowstone A-Prime).